The chain runs to 281 residues: N-acetylmuramic acid 6-phosphate etherase (281 aa).

An SIS domain is found at 63–226; the sequence is IVPRMKQGGR…TTSVMIQLGR (164 aa). Glu91 functions as the Proton donor in the catalytic mechanism. Glu122 is a catalytic residue.

This sequence belongs to the GCKR-like family. MurNAc-6-P etherase subfamily. As to quaternary structure, homodimer.

The catalysed reaction is N-acetyl-D-muramate 6-phosphate + H2O = N-acetyl-D-glucosamine 6-phosphate + (R)-lactate. It functions in the pathway amino-sugar metabolism; N-acetylmuramate degradation. Its function is as follows. Specifically catalyzes the cleavage of the D-lactyl ether substituent of MurNAc 6-phosphate, producing GlcNAc 6-phosphate and D-lactate. The sequence is that of N-acetylmuramic acid 6-phosphate etherase from Bacteroides fragilis (strain ATCC 25285 / DSM 2151 / CCUG 4856 / JCM 11019 / LMG 10263 / NCTC 9343 / Onslow / VPI 2553 / EN-2).